The chain runs to 141 residues: MDRPKPQTVRELADTLCIPLVDILLPCRFCNRFLAYIELVAFDLKGLQLIWTEEDFVFACCSSCAYATAQYEFSKFYEQSVSGRELEEIEHKPIGEIPIRCKFCLKKLDLLEKLDTCYRHQQFHKVRRNWKGLCRHCGSIG.

Zinc fingers lie at residues 27–64 (CRFC…CSSC) and 101–137 (CKFC…CRHC).

It belongs to the papillomaviridae E6 protein family. In terms of assembly, forms homodimers. Interacts with ubiquitin-protein ligase UBE3A/E6-AP; this interaction stimulates UBE3A ubiquitin activity. Interacts with host BAK1.

Its subcellular location is the host cytoplasm. The protein localises to the host nucleus. In terms of biological role, plays a major role in the induction and maintenance of cellular transformation. E6 associates with host UBE3A/E6-AP ubiquitin-protein ligase and modulates its activity. Protects host keratinocytes from apoptosis by mediating the degradation of host BAK1. May also inhibit host immune response. The chain is Protein E6 from Human papillomavirus 17.